The sequence spans 155 residues: SsrA-binding protein (155 aa).

The protein belongs to the SmpB family.

The protein localises to the cytoplasm. In terms of biological role, required for rescue of stalled ribosomes mediated by trans-translation. Binds to transfer-messenger RNA (tmRNA), required for stable association of tmRNA with ribosomes. tmRNA and SmpB together mimic tRNA shape, replacing the anticodon stem-loop with SmpB. tmRNA is encoded by the ssrA gene; the 2 termini fold to resemble tRNA(Ala) and it encodes a 'tag peptide', a short internal open reading frame. During trans-translation Ala-aminoacylated tmRNA acts like a tRNA, entering the A-site of stalled ribosomes, displacing the stalled mRNA. The ribosome then switches to translate the ORF on the tmRNA; the nascent peptide is terminated with the 'tag peptide' encoded by the tmRNA and targeted for degradation. The ribosome is freed to recommence translation, which seems to be the essential function of trans-translation. In Bacillus cereus (strain G9842), this protein is SsrA-binding protein.